Consider the following 253-residue polypeptide: uncharacterized protein (253 aa).

7–14 (GKGGVGKT) is an ATP binding site.

This sequence to M.jannaschii MJ0084 and MJ0823.

This is an uncharacterized protein from Methanocaldococcus jannaschii (strain ATCC 43067 / DSM 2661 / JAL-1 / JCM 10045 / NBRC 100440) (Methanococcus jannaschii).